The sequence spans 372 residues: Transcription factor MYB80 (372 aa).

2 consecutive HTH myb-type domains span residues 9–65 (KDNV…RPDL) and 66–116 (KHGE…KKKL). 2 consecutive DNA-binding regions (H-T-H motif) follow at residues 37 to 61 (WRLI…TNYL) and 89 to 112 (WSVI…NTKL). Polar residues predominate over residues 298-311 (MWSHQSLYSGSSGT). A disordered region spans residues 298–347 (MWSHQSLYSGSSGTEEARRELPEKGNDSVGSSGGDDDAADDGKDSGKGAA). The segment covering 312–323 (EEARRELPEKGN) has biased composition (basic and acidic residues).

It is found in the nucleus. In terms of biological role, essential for tapetum development in anthers and microsporogenesis. May regulate the timing of tapetal programmed cell death (PCD) which is critical for pollen development. In Oryza sativa subsp. japonica (Rice), this protein is Transcription factor MYB80.